The following is a 624-amino-acid chain: DNA mismatch repair protein MutL (624 aa).

A disordered region spans residues 360 to 396 (GGNHFSQPAPRRETASTEPAVARERAPQPAYHSGSGY). Residues 369–385 (PRRETASTEPAVARERA) are compositionally biased toward basic and acidic residues.

Belongs to the DNA mismatch repair MutL/HexB family.

Its function is as follows. This protein is involved in the repair of mismatches in DNA. It is required for dam-dependent methyl-directed DNA mismatch repair. May act as a 'molecular matchmaker', a protein that promotes the formation of a stable complex between two or more DNA-binding proteins in an ATP-dependent manner without itself being part of a final effector complex. The chain is DNA mismatch repair protein MutL from Serratia proteamaculans (strain 568).